Reading from the N-terminus, the 200-residue chain is NAD(P)H dehydrogenase (quinone) (200 aa).

Residues 4 to 191 form the Flavodoxin-like domain; the sequence is VLVLYYSSYG…DIARYQGKRV (188 aa). FMN-binding positions include 10-15 and 79-81; these read SSYGHV and TRF. Residue Tyr-12 participates in NAD(+) binding. Trp-99 is a binding site for substrate. FMN contacts are provided by residues 114–120 and His-135; that span reads STGTQHG.

The protein belongs to the WrbA family. It depends on FMN as a cofactor.

The enzyme catalyses a quinone + NADH + H(+) = a quinol + NAD(+). It carries out the reaction a quinone + NADPH + H(+) = a quinol + NADP(+). In Burkholderia lata (strain ATCC 17760 / DSM 23089 / LMG 22485 / NCIMB 9086 / R18194 / 383), this protein is NAD(P)H dehydrogenase (quinone).